A 614-amino-acid chain; its full sequence is Dihydroxy-acid dehydratase (614 aa).

Aspartate 81 is a Mg(2+) binding site. Position 122 (cysteine 122) interacts with [2Fe-2S] cluster. Mg(2+) is bound by residues aspartate 123 and lysine 124. At lysine 124 the chain carries N6-carboxylysine. Residue cysteine 193 coordinates [2Fe-2S] cluster. Glutamate 489 serves as a coordination point for Mg(2+). Serine 515 (proton acceptor) is an active-site residue.

It belongs to the IlvD/Edd family. As to quaternary structure, homodimer. [2Fe-2S] cluster serves as cofactor. Requires Mg(2+) as cofactor.

The catalysed reaction is (2R)-2,3-dihydroxy-3-methylbutanoate = 3-methyl-2-oxobutanoate + H2O. It carries out the reaction (2R,3R)-2,3-dihydroxy-3-methylpentanoate = (S)-3-methyl-2-oxopentanoate + H2O. Its pathway is amino-acid biosynthesis; L-isoleucine biosynthesis; L-isoleucine from 2-oxobutanoate: step 3/4. It participates in amino-acid biosynthesis; L-valine biosynthesis; L-valine from pyruvate: step 3/4. Functions in the biosynthesis of branched-chain amino acids. Catalyzes the dehydration of (2R,3R)-2,3-dihydroxy-3-methylpentanoate (2,3-dihydroxy-3-methylvalerate) into 2-oxo-3-methylpentanoate (2-oxo-3-methylvalerate) and of (2R)-2,3-dihydroxy-3-methylbutanoate (2,3-dihydroxyisovalerate) into 2-oxo-3-methylbutanoate (2-oxoisovalerate), the penultimate precursor to L-isoleucine and L-valine, respectively. This is Dihydroxy-acid dehydratase from Hahella chejuensis (strain KCTC 2396).